The primary structure comprises 566 residues: Medium-chain fatty-acid--CoA ligase (566 aa).

231-242 (ILASERAYCARL) provides a ligand contact to ATP.

It belongs to the ATP-dependent AMP-binding enzyme family. In terms of assembly, homodimer. The cofactor is Mg(2+).

The protein localises to the cell membrane. It carries out the reaction hexanoate + ATP + CoA = hexanoyl-CoA + AMP + diphosphate. The catalysed reaction is octanoate + ATP + CoA = octanoyl-CoA + AMP + diphosphate. The enzyme catalyses dodecanoate + ATP + CoA = dodecanoyl-CoA + AMP + diphosphate. It participates in lipid metabolism; fatty acid beta-oxidation. In terms of biological role, catalyzes the esterification, concomitant with transport, of exogenous fatty acids into metabolically active CoA thioesters for subsequent degradation or incorporation into phospholipids. Is maximally active on C6:0, C8:0 and C12:0 fatty acids, while has a low activity on C14-C18 chain length fatty acids. Is involved in the anaerobic beta-oxidative degradation of fatty acids, which allows anaerobic growth of E.coli on fatty acids as a sole carbon and energy source in the presence of nitrate or fumarate as a terminal electron acceptor. Can functionally replace FadD under anaerobic conditions. The polypeptide is Medium-chain fatty-acid--CoA ligase (Escherichia coli (strain K12)).